The sequence spans 152 residues: Lipoprotein signal peptidase (152 aa).

Helical transmembrane passes span 55 to 75 and 85 to 105; these read NKMW…VFYM and LGIS…DRVF. Catalysis depends on residues Asp-111 and Asp-129. A helical membrane pass occupies residues 124 to 144; it reads VFNIADSALCIGVVLIIIQTL.

Belongs to the peptidase A8 family.

It is found in the cell membrane. The enzyme catalyses Release of signal peptides from bacterial membrane prolipoproteins. Hydrolyzes -Xaa-Yaa-Zaa-|-(S,diacylglyceryl)Cys-, in which Xaa is hydrophobic (preferably Leu), and Yaa (Ala or Ser) and Zaa (Gly or Ala) have small, neutral side chains.. The protein operates within protein modification; lipoprotein biosynthesis (signal peptide cleavage). This protein specifically catalyzes the removal of signal peptides from prolipoproteins. This Bacillus cereus (strain AH187) protein is Lipoprotein signal peptidase.